Consider the following 186-residue polypeptide: Large ribosomal subunit protein uL5 (186 aa).

The protein belongs to the universal ribosomal protein uL5 family. Part of the 50S ribosomal subunit; part of the 5S rRNA/L5/L18/L25 subcomplex. Contacts the 5S rRNA and the P site tRNA. Forms a bridge to the 30S subunit in the 70S ribosome.

Functionally, this is one of the proteins that bind and probably mediate the attachment of the 5S RNA into the large ribosomal subunit, where it forms part of the central protuberance. In the 70S ribosome it contacts protein S13 of the 30S subunit (bridge B1b), connecting the 2 subunits; this bridge is implicated in subunit movement. Contacts the P site tRNA; the 5S rRNA and some of its associated proteins might help stabilize positioning of ribosome-bound tRNAs. This Mycoplasmopsis synoviae (strain 53) (Mycoplasma synoviae) protein is Large ribosomal subunit protein uL5.